A 203-amino-acid chain; its full sequence is Peptide deformylase (203 aa).

Fe cation contacts are provided by cysteine 130 and histidine 173. Glutamate 174 is a catalytic residue. Histidine 177 serves as a coordination point for Fe cation.

This sequence belongs to the polypeptide deformylase family. Fe(2+) is required as a cofactor.

It catalyses the reaction N-terminal N-formyl-L-methionyl-[peptide] + H2O = N-terminal L-methionyl-[peptide] + formate. Removes the formyl group from the N-terminal Met of newly synthesized proteins. Requires at least a dipeptide for an efficient rate of reaction. N-terminal L-methionine is a prerequisite for activity but the enzyme has broad specificity at other positions. This chain is Peptide deformylase, found in Streptococcus pneumoniae serotype 19F (strain G54).